A 178-amino-acid chain; its full sequence is HTH-type transcriptional regulator SutR (178 aa).

The HTH cro/C1-type domain maps to Leu-12–Phe-66. The segment at residues Leu-23–Arg-42 is a DNA-binding region (H-T-H motif). The Cupin type-2 domain maps to Gln-105–Ser-171.

Its function is as follows. Regulates the expression of 12-16 transcription units involved in various steps of sulfur utilization. Represses expression of pfkB, fliZ, cysE, ydcO and its own expression. Activates expression of ypfN. Acts by binding to SutR boxes. The protein is HTH-type transcriptional regulator SutR of Escherichia coli (strain K12).